The chain runs to 535 residues: uncharacterized protein (535 aa).

The chain crosses the membrane as a helical span at residues 17-37 (IVLLCMIGFFCTTFMRIHFAL). N-linked (GlcNAc...) asparagine glycans are attached at residues N44 and N61. A run of 6 helical transmembrane segments spans residues 107–127 (LIFSGTFWGSLITVLPSMFFI), 144–164 (ILVTVITPFLATHFGYFSVFL), 167–187 (IGMGLGEGFVFPTNNAIIGNW), 199–219 (IFTLGNQIASAAGSPMVAAVC), 225–245 (WPATFYFAGIFATGWSILWFF), and 292–312 (AFLGQLQCHFFVNLFMTLFQI). A glycan (N-linked (GlcNAc...) asparagine) is linked at N329. 5 helical membrane passes run 331–351 (TFTAIPNIFNMIFKVVWGIGI), 368–388 (VSHGVASFGSSFSLILLAFFV), 395–415 (TGLIFFCLMYSSMGTFVSGFY), 429–451 (MSAISMFVAMIGRLTTPAVMSMF), and 463–483 (IFIGCSLAHIFSGSIFLLFGS).

Belongs to the major facilitator superfamily. Sodium/anion cotransporter family.

It is found in the membrane. This is an uncharacterized protein from Caenorhabditis elegans.